The sequence spans 388 residues: Large ribosomal subunit protein uL3A (388 aa).

Over residues 1–10 (MSHCKFEQPR) the composition is skewed to basic and acidic residues. The interval 1-34 (MSHCKFEQPRHGSLGFLPRKRASRQRGKVKAFPK) is disordered. At serine 13 the chain carries Phosphoserine. The span at 18–31 (PRKRASRQRGKVKA) shows a compositional bias: basic residues. A phosphoserine mark is found at serine 65, serine 140, serine 143, serine 207, serine 295, and serine 355. Residue threonine 372 is modified to Phosphothreonine.

The protein belongs to the universal ribosomal protein uL3 family. As to quaternary structure, component of the large ribosomal subunit (LSU). Mature yeast ribosomes consist of a small (40S) and a large (60S) subunit. The 40S small subunit contains 1 molecule of ribosomal RNA (18S rRNA) and at least 33 different proteins. The large 60S subunit contains 3 rRNA molecules (25S, 5.8S and 5S rRNA) and at least 46 different proteins. uL3 forms together with ES39L one of the contact sites for the signal recognition particle that targets ribosomes to the endoplasmic reticulum membrane.

The protein localises to the cytoplasm. Functionally, component of the ribosome, a large ribonucleoprotein complex responsible for the synthesis of proteins in the cell. The small ribosomal subunit (SSU) binds messenger RNAs (mRNAs) and translates the encoded message by selecting cognate aminoacyl-transfer RNA (tRNA) molecules. The large subunit (LSU) contains the ribosomal catalytic site termed the peptidyl transferase center (PTC), which catalyzes the formation of peptide bonds, thereby polymerizing the amino acids delivered by tRNAs into a polypeptide chain. The nascent polypeptides leave the ribosome through a tunnel in the LSU and interact with protein factors that function in enzymatic processing, targeting, and the membrane insertion of nascent chains at the exit of the ribosomal tunnel. uL3 plays a role in coordinating processes of accommodating the aminoacyl-tRNA in the PTC. The polypeptide is Large ribosomal subunit protein uL3A (rpl301) (Schizosaccharomyces pombe (strain 972 / ATCC 24843) (Fission yeast)).